A 460-amino-acid chain; its full sequence is Nucleosome assembly protein 1-like 2 (460 aa).

2 stretches are compositionally biased toward basic and acidic residues: residues 1 to 11 (MAESENRKELS) and 27 to 36 (LGEHLERGED). Disordered stretches follow at residues 1–88 (MAES…ADRP) and 214–238 (EEEEEEEEDDIEATGEENKEEEDPK). Residues 214–236 (EEEEEEEEDDIEATGEENKEEED) are compositionally biased toward acidic residues. The Nuclear localization signal motif lies at 346–352 (IKKKQKH).

The protein belongs to the nucleosome assembly protein (NAP) family.

It localises to the nucleus. In terms of biological role, acidic protein which may be involved in interactions with other proteins or DNA. The protein is Nucleosome assembly protein 1-like 2 (NAP1L2) of Homo sapiens (Human).